We begin with the raw amino-acid sequence, 459 residues long: MAASCGGRVVVFPFPFQGHFNPVMRLARALHARGVGITVFHTAGARAPDPADYPADYRFVPVPVEVAPELMASEDIAAIVTALNAACEAPFRDRLSALLSAADGEAGEAGGRVRCVLTDVSWDAVLSAARGLGVPALGVMTASAATFRVYMAYRTLVDKGYLPVREERKDDAVAELPPYRVKDLLRHETCDLEEFADLLGRVIAAARLSSGLIFHTFPFIEAGTLGEIRDDMSVPVYAVAPLNKLVPAATASLHGEVQADRGCLRWLDAQRARSVLYVSFGSMAAMDPHEFVELAWGLADAGRPFVWVVRPNLIRGFESGALPDGVEDRVRGRGVVVSWAPQEEVLAHPAVGGFFTHCGWNSTVEAVSEGVPMICHPRHGDQYGNARYVCHVWKVGTEVAGDQLERGEIKAAIDRLMGGSEEGEGIRKRMNELKIAADKGIDESAGSDLTNLVHLINSY.

Residue histidine 19 is the Proton acceptor of the active site. An anthocyanidin is bound at residue histidine 19. Aspartate 119 serves as the catalytic Charge relay. Positions 141, 340, 342, 357, 360, 361, 362, and 365 each coordinate UDP-alpha-D-glucose. Glycine 380 is an an anthocyanidin binding site. UDP-alpha-D-glucose-binding residues include aspartate 381 and glutamine 382.

It belongs to the UDP-glycosyltransferase family. It depends on Mg(2+) as a cofactor. The cofactor is Ca(2+). In terms of tissue distribution, expressed at the same levels in roots and shoots.

It catalyses the reaction DIMBOA + UDP-alpha-D-glucose = DIMBOA beta-D-glucoside + UDP + H(+). It carries out the reaction DIBOA + UDP-alpha-D-glucose = DIBOA beta-D-glucoside + UDP + H(+). Glucosyltransferase involved in the last step of benzoxazinoid glucoside biosynthesis. Catalyzes the glucosylation of hydroxamic acids utilizing UDP-glucose as glucose doner, reducing the toxicity of these natural insecticides for storage. Can use DIMBOA and DIBOA as substrates, HMBOA (2-hydroxy-7-methoxy-2H-1,4-benzoxazin-3(4H)-one) and HBOA (2-hydroxy-2H-1,4-benzoxazin-3(4H)-one) with a lower efficiency, but not indole acetic acid or quercitin. The chain is DIMBOA UDP-glucosyltransferase BX8 (Bx8) from Zea mays (Maize).